Consider the following 1037-residue polypeptide: Sodium/potassium exporting P-type ATPase cta3 (1037 aa).

At 1-61 (MVTINISNPV…GVSAWKVLLR (61 aa)) the chain is on the cytoplasmic side. A helical membrane pass occupies residues 62 to 82 (QVLNAMCVVLILAAALSFGTT). A topological domain (extracellular) is located at residue Asp83. A helical membrane pass occupies residues 84 to 104 (WIEGGVISAIIVLNITVGFIQ). Topologically, residues 105-281 (EYKAEKTMDS…LNVGTPLQRK (177 aa)) are cytoplasmic. A helical transmembrane segment spans residues 282 to 302 (LTVLAYILFCIAIILAIIVMA). Residues 303-313 (AHSFHVTNEVS) lie on the Extracellular side of the membrane. Residues 314 to 334 (IYAISLGISIIPESLIAVLSI) traverse the membrane as a helical segment. Topologically, residues 335–760 (TMAMGQKNMS…GRRMFDNIMR (426 aa)) are cytoplasmic. Asp368 serves as the catalytic 4-aspartylphosphate intermediate. The Mg(2+) site is built by Asp368 and Thr370. The ATP site is built by Thr370, Glu468, Lys520, Arg559, Thr620, Gly621, Asp622, Arg678, and Lys684. A Mg(2+)-binding site is contributed by Asp703. Asn706 is a binding site for ATP. The chain crosses the membrane as a helical span at residues 761 to 781 (FVLHLLVSNVGEVILLVVGLA). Residues 782–787 (FRDEVH) are Extracellular-facing. The chain crosses the membrane as a helical span at residues 788-808 (LSVFPMSPVEILWCNMITSSF). At 809 to 844 (PSMGLGMELAQPDVMERLPHDNKVGIFQKSLIVDMM) the chain is on the cytoplasmic side. The chain crosses the membrane as a helical span at residues 845–865 (VYGFFLGVVSLMTWVVIMYGF). Over 866–889 (GTGNLSYDCNAHYHAGCNDVFKAR) the chain is Extracellular. Asn869 carries an N-linked (GlcNAc...) asparagine glycan. A helical membrane pass occupies residues 890 to 910 (SAVFAVVTFCILIMAVEVKNF). Topologically, residues 911–939 (DNSLFNLHGIPWGEWNFRYFLHTLVENKF) are cytoplasmic. Residues 940–960 (LAWAIALAAVSVFPTIYIPVI) form a helical membrane-spanning segment. The Extracellular portion of the chain corresponds to 961–969 (NRDVFKHTY). A helical membrane pass occupies residues 970 to 990 (IGWEWGVVAVAVMFYFFYVEI). Over 991-1037 (WKSIRRSLTNPQKKGKFRRTLSNTITTESKLSEKDLEHRLFLQSRRA) the chain is Cytoplasmic. Phosphoserine is present on Ser1012.

This sequence belongs to the cation transport ATPase (P-type) (TC 3.A.3) family. Type IID subfamily. Requires Mg(2+) as cofactor. Post-translationally, the active site is phosphorylated in presence of sodium or potassium and in conditions of higher pH. Not phosphorylated in presence of calcium ions.

The protein localises to the cell membrane. The enzyme catalyses Na(+)(in) + ATP + H2O = Na(+)(out) + ADP + phosphate + H(+). The catalysed reaction is K(+)(in) + ATP + H2O = K(+)(out) + ADP + phosphate + H(+). Catalyzes the hydrolysis of ATP coupled with the export of sodium and potassium from the cell. May export sodium less efficiently. May transport other cations such as lithium. Sodium/potassium efflux ATPases are involved in salt tolerance and maintaining the membrane potential across the plasma membrane in high salinity (Na+) or alkaline (K+) environments. The chain is Sodium/potassium exporting P-type ATPase cta3 from Schizosaccharomyces pombe (strain 972 / ATCC 24843) (Fission yeast).